The sequence spans 173 residues: Nuclear transcription factor Y subunit B-8 (173 aa).

Residues 1 to 30 (MAESQAKSPGGCGSHESGGDQSPRSLHVRE) are disordered. N-acetylalanine is present on Ala-2. A DNA-binding region spans residues 35–41 (LPIANIS). The interval 62 to 73 (VQECVSEFISFV) is subunit association domain (SAD). The disordered stretch occupies residues 123–173 (DTKGSAKGGDPNAKKDGQSSQNGQFSQLAHQGPYGNSQAQQHMMVPMPGTD). Positions 140–163 (QSSQNGQFSQLAHQGPYGNSQAQQ) are enriched in polar residues.

The protein belongs to the NFYB/HAP3 subunit family. As to quaternary structure, heterotrimeric transcription factor composed of three components, NF-YA, NF-YB and NF-YC. NF-YB and NF-YC must interact and dimerize for NF-YA association and DNA binding. In terms of tissue distribution, expressed in flowers and mature rosettes.

It is found in the nucleus. Component of the NF-Y/HAP transcription factor complex. The NF-Y complex stimulates the transcription of various genes by recognizing and binding to a CCAAT motif in promoters. The chain is Nuclear transcription factor Y subunit B-8 (NFYB8) from Arabidopsis thaliana (Mouse-ear cress).